The sequence spans 115 residues: Large ribosomal subunit protein bL20 (115 aa).

It belongs to the bacterial ribosomal protein bL20 family.

Functionally, binds directly to 23S ribosomal RNA and is necessary for the in vitro assembly process of the 50S ribosomal subunit. It is not involved in the protein synthesizing functions of that subunit. The polypeptide is Large ribosomal subunit protein bL20 (Chlorobium chlorochromatii (strain CaD3)).